Here is a 329-residue protein sequence, read N- to C-terminus: Nitrogenase iron-iron protein beta chain (329 aa).

Residues Cys-20, Cys-45, Cys-104, and Ser-143 each coordinate [8Fe-7S] cluster. Residues 213–288 are disordered; it reads SADGSLVSHG…EEGDGKPIPQ (76 aa). The segment covering 257–271 has biased composition (basic residues); it reads RSRRSSARPRSHPQY.

This sequence belongs to the NifD/NifK/NifE/NifN family. Hexamer of two alpha, two beta, and two delta chains. The cofactor is [8Fe-7S] cluster.

It catalyses the reaction N2 + 8 reduced [2Fe-2S]-[ferredoxin] + 16 ATP + 16 H2O = H2 + 8 oxidized [2Fe-2S]-[ferredoxin] + 2 NH4(+) + 16 ADP + 16 phosphate + 6 H(+). Functionally, this iron-iron protein is part of the nitrogenase complex that catalyzes the key enzymatic reactions in nitrogen fixation. Other nitrogenase complexes utilize a molybdenum-iron protein or a vanadium-iron protein. This is Nitrogenase iron-iron protein beta chain (anfK) from Ruminiclostridium hungatei (Clostridium hungatei).